The primary structure comprises 1708 residues: Rapamycin-insensitive companion of mTOR (1708 aa).

Residues 1 to 789 form an interaction with NBN region; the sequence is MAAIGRGRSL…DKANLHALIQ (789 aa). Phosphoserine is present on residues Ser21, Ser35, and Ser265. A Glycyl lysine isopeptide (Lys-Gly) (interchain with G-Cter in ubiquitin) cross-link involves residue Lys274. The ribosome-binding domain stretch occupies residues 521–570; that stretch reads LKDTEEALLINLRDSQVLQHKENLDWDWNLIGTILKWPNVNLRNYKDEQL. ATP-binding residues include Asn543, Arg572, and Arg576. Low complexity predominate over residues 1021 to 1043; sequence TLSLNSESTSSRHNSESESAPSS. The tract at residues 1021–1045 is disordered; it reads TLSLNSESTSSRHNSESESAPSSMF. N6-acetyllysine occurs at positions 1092 and 1095. Disordered regions lie at residues 1101 to 1198 and 1218 to 1247; these read SLTL…ENTS and SFNTDTTTSGISSMSSSPSRETVAVDPTAM. Position 1103 is a phosphothreonine (Thr1103). Residues Lys1116, Lys1119, and Lys1125 each carry the N6-acetyllysine modification. At Thr1135 the chain carries Phosphothreonine; by RPS6KB1. Ser1138 carries the post-translational modification Phosphoserine. Residues 1147–1158 are compositionally biased toward polar residues; the sequence is FTSSSAQKSLQL. 3 positions are modified to phosphoserine: Ser1161, Ser1218, and Ser1234. Over residues 1221–1239 the composition is skewed to low complexity; it reads TDTTTSGISSMSSSPSRET. Position 1270 is a phosphothreonine (Thr1270). Residues Ser1273, Ser1277, Ser1281, and Ser1283 each carry the phosphoserine modification. Phosphothreonine is present on Thr1294. Residues Ser1301 and Ser1312 each carry the phosphoserine modification. Thr1331 carries the post-translational modification Phosphothreonine. Residues Ser1345 and Ser1352 each carry the phosphoserine modification. At Thr1375 the chain carries Phosphothreonine. Phosphoserine is present on Ser1384. Tyr1385 bears the Phosphotyrosine mark. 3 positions are modified to phosphoserine: Ser1387, Ser1395, and Ser1410. 3 residues coordinate Zn(2+): His1514, Cys1519, and Cys1522. 4 positions are modified to phosphoserine: Ser1570, Ser1573, Ser1576, and Ser1591. Cys1651 contributes to the Zn(2+) binding site.

This sequence belongs to the RICTOR family. In terms of assembly, component of the mechanistic target of rapamycin complex 2 (mTORC2), consisting in two heterotretramers composed of MTOR, MLST8, RICTOR and MAPKAP1/SIN1. The mTORC2 core complex associates with PRR5/PROTOR1 and/or PRR5L/PROTOR2. Contrary to mTORC1, mTORC2 does not bind to and is not sensitive to FKBP12-rapamycin. Binds directly to MTOR and PRR5 within the TORC2 complex; interaction with MTOR is enhanced by deubiquitination of RICTOR by USP9X. Interaction with MAPKAP1 is not enhanced by RICTOR deubiquitination by USP9X. Interacts with CCDC28B. Interacts with NBN. Interacts with SIK3. Interacts with NCKAP1L. Interacts with ARMH4 (via cytoplasmic tail); this interaction bridges ARMH4 to the mTORC2 complex and inhibits the mTORC2 kinase activity. Interacts with UBXN2A. Interacts with TSPAN8. In terms of processing, phosphorylated by MTOR; when part of mTORC2. Phosphorylated at Thr-1135 by RPS6KB1 downstream of the mTORC1 complex: phosphorylation of RICTOR inhibits mTORC2 signaling by creating a binding site for 14-3-3 proteins. Phosphorylated at Ser-1234 by GSK3B in response to endoplasmic stress, inhibiting mTORC2 signaling. Ubiquitinated by the SCF(FBXW7) complex, leading to its degradation by the proteasome. Deubiquitinated by USP9X; deubiquitination stabilizes RICTOR and enhances its binding to MTOR, thus promoting mTORC2 complex assembly. Post-translationally, acetylated by EP300/p300 in response to glucose, leading to activate the mTORC2 complex. Acetylation by BLOC1S1/GCN5L1 in response to hypotoxic stress protects RICTOR against ubiquitination and subsequent degradation by the proteasome. As to expression, highest levels in liver and brain with expression also detected in heart, muscle, spleen and kidney (at protein level).

Its subcellular location is the cell membrane. It is found in the endoplasmic reticulum membrane. The protein resides in the lysosome membrane. Component of the mechanistic target of rapamycin complex 2 (mTORC2), which transduces signals from growth factors to pathways involved in proliferation, cytoskeletal organization, lipogenesis and anabolic output. In response to growth factors, mTORC2 phosphorylates and activates AGC protein kinase family members, including AKT (AKT1, AKT2 and AKT3), PKC (PRKCA, PRKCB and PRKCE) and SGK1. In contrast to mTORC1, mTORC2 is nutrient-insensitive. Within the mTORC2 complex, RICTOR probably acts as a molecular adapter. RICTOR is responsible for the FKBP12-rapamycin-insensitivity of mTORC2. mTORC2 plays a critical role in AKT1 activation by mediating phosphorylation of different sites depending on the context, such as 'Thr-450', 'Ser-473', 'Ser-477' or 'Thr-479', facilitating the phosphorylation of the activation loop of AKT1 on 'Thr-308' by PDPK1/PDK1 which is a prerequisite for full activation. mTORC2 catalyzes the phosphorylation of SGK1 at 'Ser-422' and of PRKCA on 'Ser-657'. The mTORC2 complex also phosphorylates various proteins involved in insulin signaling, such as FBXW8 and IGF2BP1. mTORC2 acts upstream of Rho GTPases to regulate the actin cytoskeleton, probably by activating one or more Rho-type guanine nucleotide exchange factors. mTORC2 promotes the serum-induced formation of stress-fibers or F-actin. Plays an essential role in embryonic growth and development. The polypeptide is Rapamycin-insensitive companion of mTOR (Mus musculus (Mouse)).